We begin with the raw amino-acid sequence, 991 residues long: UPF0182 protein RHA1_ro08670 (991 aa).

The next 7 membrane-spanning stretches (helical) occupy residues 16–36 (VMIM…RLVV), 61–81 (LILF…AVVW), 115–135 (FTVG…QASW), 170–190 (LILA…LGTH), 214–234 (VQLA…YWLD), 263–283 (RLIM…AIAV), and 291–311 (MATA…PALI). Residues 902–940 (TGAVATAPGGDATTPPPTGGQPPAPPPPGAPPAPPPATS) are disordered. Positions 903-914 (GAVATAPGGDAT) are enriched in low complexity. Pro residues predominate over residues 915–938 (TPPPTGGQPPAPPPPGAPPAPPPA).

It belongs to the UPF0182 family.

The protein resides in the cell membrane. In Rhodococcus jostii (strain RHA1), this protein is UPF0182 protein RHA1_ro08670.